The primary structure comprises 701 residues: Putative pentatricopeptide repeat-containing protein At3g25970 (701 aa).

16 PPR repeats span residues 34-64 (DIYV…MPKR), 65-99 (DSVS…GSDV), 100-134 (DGYS…GYEC), 135-165 (NVYV…ISEP), 166-200 (NSVS…AAVT), 202-236 (DAGT…GLQH), 237-267 (EITI…LGGS), 269-303 (DLIS…WVET), 304-338 (DIYT…GLEQ), 339-371 (VTSA…LKSK), 372-406 (DLIS…EIKV), 407-441 (DDYA…GFVS), 442-472 (NEFV…ISSK), 474-508 (STVA…NVKL), 509-539 (DHVT…MEPV), and 545-575 (RMEH…MPLN). The segment at 580 to 655 (VLKTFLGVCR…VPGWSWIEIR (76 aa)) is type E motif. A type E(+) motif region spans residues 656–686 (NQVKAFNAEDRSNPLCQDIYMMIKDLTQEMQ).

It belongs to the PPR family. PCMP-E subfamily.

The polypeptide is Putative pentatricopeptide repeat-containing protein At3g25970 (PCMP-E46) (Arabidopsis thaliana (Mouse-ear cress)).